The sequence spans 275 residues: Gap junction gamma-3 protein (275 aa).

At 1-22 (MCGSFLRRVAAEESRHPTPVGR) the chain is on the cytoplasmic side. Residues 23–43 (LLLPALLGLRLVLLAAGGTGV) form a helical membrane-spanning segment. At 44–77 (FGGGEEQSEFVCHTQQAGCKAVCYDAFHPLSPLR) the chain is on the extracellular side. Residues 78–98 (FWAFQVTLVAVPSALYMGFIL) traverse the membrane as a helical segment. Residues 99–134 (YHVIWHWEASEKVKTEEETLSQGEKGGEASRAGSSR) lie on the Cytoplasmic side of the membrane. Residues 135-155 (LLWAYVAQLGVRLALEGAALG) traverse the membrane as a helical segment. At 156-196 (GQYHLYGFRMPSSFVCRLEPCLGSTNCYLSRPSEKSIFLKT) the chain is on the extracellular side. A helical transmembrane segment spans residues 197-217 (MFGVTGLCLLFTLLELVLLGL). Residues 218–275 (GRWWRIWRHKSPSSNYSPTSQSAKRCKAPTDNFPVVEIRERPGEAGERGSEVPLSARP) lie on the Cytoplasmic side of the membrane. The segment covering 254–267 (EIRERPGEAGERGS) has biased composition (basic and acidic residues). The disordered stretch occupies residues 254-275 (EIRERPGEAGERGSEVPLSARP).

It belongs to the connexin family. Gamma-type subfamily. As to quaternary structure, a connexon is composed of a hexamer of connexins.

It is found in the cell membrane. The protein localises to the cell junction. It localises to the gap junction. In terms of biological role, one gap junction consists of a cluster of closely packed pairs of transmembrane channels, the connexons, through which materials of low MW diffuse from one cell to a neighboring cell. In Bos taurus (Bovine), this protein is Gap junction gamma-3 protein (GJC3).